A 214-amino-acid chain; its full sequence is ATP-dependent Clp protease proteolytic subunit 3 (214 aa).

The Nucleophile role is filled by S106. The active site involves H131.

Belongs to the peptidase S14 family. As to quaternary structure, fourteen ClpP subunits assemble into 2 heptameric rings which stack back to back to give a disk-like structure with a central cavity, resembling the structure of eukaryotic proteasomes.

The protein resides in the cytoplasm. It carries out the reaction Hydrolysis of proteins to small peptides in the presence of ATP and magnesium. alpha-casein is the usual test substrate. In the absence of ATP, only oligopeptides shorter than five residues are hydrolyzed (such as succinyl-Leu-Tyr-|-NHMec, and Leu-Tyr-Leu-|-Tyr-Trp, in which cleavage of the -Tyr-|-Leu- and -Tyr-|-Trp bonds also occurs).. Its function is as follows. Cleaves peptides in various proteins in a process that requires ATP hydrolysis. Has a chymotrypsin-like activity. Plays a major role in the degradation of misfolded proteins. In Trichormus variabilis (strain ATCC 29413 / PCC 7937) (Anabaena variabilis), this protein is ATP-dependent Clp protease proteolytic subunit 3.